Consider the following 340-residue polypeptide: Protein arginine N-methyltransferase 6 (340 aa).

In terms of domain architecture, SAM-dependent MTase PRMT-type spans D15 to G339. Residues H28, R37, G61, E83, and E112 each coordinate S-adenosyl-L-methionine. Active-site residues include E126 and E135.

Belongs to the class I-like SAM-binding methyltransferase superfamily. Protein arginine N-methyltransferase family. PRMT6 subfamily.

The protein localises to the nucleus. The enzyme catalyses L-arginyl-[protein] + 2 S-adenosyl-L-methionine = N(omega),N(omega)-dimethyl-L-arginyl-[protein] + 2 S-adenosyl-L-homocysteine + 2 H(+). Functionally, arginine methyltransferase that can catalyze the formation of both omega-N monomethylarginine (MMA) and asymmetrical dimethylarginine (aDMA), with a strong preference for the formation of aDMA. Preferentially methylates arginyl residues present in a glycine and arginine-rich domain and displays preference for monomethylated substrates. Specifically mediates the asymmetric dimethylation of histone H3 'Arg-2' to form H3R2me2a. H3R2me2a represents a specific tag for epigenetic transcriptional repression and is mutually exclusive with methylation on histone H3 'Lys-4' (H3K4me2 and H3K4me3). Acts as a transcriptional repressor of various genes such as HOXA2, THBS1 and TP53. Repression of TP53 blocks cellular senescence. Also methylates histone H2A and H4 'Arg-3' (H2AR3me and H4R3me, respectively). Acts as a regulator of DNA base excision during DNA repair by mediating the methylation of DNA polymerase beta (POLB), leading to the stimulation of its polymerase activity by enhancing DNA binding and processivity. Methylates HMGA1. Regulates alternative splicing events. Acts as a transcriptional coactivator of a number of steroid hormone receptors including ESR1, ESR2, PGR and NR3C1. This chain is Protein arginine N-methyltransferase 6 (prmt6), found in Xenopus laevis (African clawed frog).